A 145-amino-acid polypeptide reads, in one-letter code: Large ribosomal subunit protein uL13 (145 aa).

It belongs to the universal ribosomal protein uL13 family. In terms of assembly, part of the 50S ribosomal subunit.

Functionally, this protein is one of the early assembly proteins of the 50S ribosomal subunit, although it is not seen to bind rRNA by itself. It is important during the early stages of 50S assembly. This chain is Large ribosomal subunit protein uL13, found in Exiguobacterium sibiricum (strain DSM 17290 / CCUG 55495 / CIP 109462 / JCM 13490 / 255-15).